The sequence spans 216 residues: Fibroblast growth factor 17 (216 aa).

An N-terminal signal peptide occupies residues 1 to 22 (MGAARLLPNLTLCLQLLILCCQ). The N-linked (GlcNAc...) asparagine glycan is linked to Asn-137. The segment at 195-216 (FEFVGSAPTRRTKRTRRPQSQT) is disordered. The span at 204-216 (RRTKRTRRPQSQT) shows a compositional bias: basic residues.

Belongs to the heparin-binding growth factors family. Interacts with FGFR3 and FGFR4.

The protein resides in the secreted. Functionally, plays an important role in the regulation of embryonic development and as signaling molecule in the induction and patterning of the embryonic brain. Required for normal brain development. This chain is Fibroblast growth factor 17 (Fgf17), found in Mus musculus (Mouse).